The chain runs to 416 residues: 4-hydroxy-3-methylbut-2-en-1-yl diphosphate synthase (flavodoxin) (416 aa).

4 residues coordinate [4Fe-4S] cluster: Cys-304, Cys-307, Cys-350, and Glu-357.

This sequence belongs to the IspG family. [4Fe-4S] cluster serves as cofactor.

It catalyses the reaction (2E)-4-hydroxy-3-methylbut-2-enyl diphosphate + oxidized [flavodoxin] + H2O + 2 H(+) = 2-C-methyl-D-erythritol 2,4-cyclic diphosphate + reduced [flavodoxin]. It functions in the pathway isoprenoid biosynthesis; isopentenyl diphosphate biosynthesis via DXP pathway; isopentenyl diphosphate from 1-deoxy-D-xylulose 5-phosphate: step 5/6. Its function is as follows. Converts 2C-methyl-D-erythritol 2,4-cyclodiphosphate (ME-2,4cPP) into 1-hydroxy-2-methyl-2-(E)-butenyl 4-diphosphate. This is 4-hydroxy-3-methylbut-2-en-1-yl diphosphate synthase (flavodoxin) from Allorhizobium ampelinum (strain ATCC BAA-846 / DSM 112012 / S4) (Agrobacterium vitis (strain S4)).